A 139-amino-acid chain; its full sequence is NADPH-dependent 7-cyano-7-deazaguanine reductase (139 aa).

Cys-34 (thioimide intermediate) is an active-site residue. Residue Asp-41 is the Proton donor of the active site. Substrate-binding positions include 56-58 (VEL) and 75-76 (HE).

It belongs to the GTP cyclohydrolase I family. QueF type 1 subfamily.

The protein localises to the cytoplasm. The catalysed reaction is 7-aminomethyl-7-carbaguanine + 2 NADP(+) = 7-cyano-7-deazaguanine + 2 NADPH + 3 H(+). It participates in tRNA modification; tRNA-queuosine biosynthesis. Its function is as follows. Catalyzes the NADPH-dependent reduction of 7-cyano-7-deazaguanine (preQ0) to 7-aminomethyl-7-deazaguanine (preQ1). The polypeptide is NADPH-dependent 7-cyano-7-deazaguanine reductase (Nitrosospira multiformis (strain ATCC 25196 / NCIMB 11849 / C 71)).